Consider the following 198-residue polypeptide: MDSLLMNRRKFLYQFKNVRWAKGRRETYLCYVVKRRDSATSFSLDFGYLRNKNGCHVELLFLRYISDWDLDPGRCYRVTWFTSWSPCYDCARHVADFLRGNPNLSLRIFTARLYFCEDRKAEPEGLRRLHRAGVQIAIMTFKDYFYCWNTFVENHERTFKAWEGLHENSVRLSRQLRRILLPLYEVDDLRDAFRTLGL.

Positions 1 to 30 (MDSLLMNRRKFLYQFKNVRWAKGRRETYLC) match the Bipartite nuclear localization signal motif. Residues 2–26 (DSLLMNRRKFLYQFKNVRWAKGRRE) form an interaction with SUPT6H region. Residues 23–129 (GRRETYLCYV…KAEPEGLRRL (107 aa)) form the CMP/dCMP-type deaminase domain. T27 bears the Phosphothreonine; by PKA mark. S38 carries the phosphoserine; by PKA modification. The tract at residues 39-42 (ATSF) is important for interaction with CTNNBL1. Residue H56 participates in Zn(2+) binding. E58 functions as the Proton donor in the catalytic mechanism. C87 and C90 together coordinate Zn(2+). The segment at 88–116 (YDCARHVADFLRGNPNLSLRIFTARLYFC) is required for interaction with RNF126. Positions 183 to 198 (LYEVDDLRDAFRTLGL) match the Nuclear export signal motif.

It belongs to the cytidine and deoxycytidylate deaminase family. In terms of assembly, interacts with CTNNBL1; the interaction is important for the immunoglobulin switch activity of AICDA. Interacts (via its NLS) with KPNA1. Interacts with PKA/PRKACA and PRKAR1A/PKR1. Interacts with TRIM28 and NCL. Interacts with SUPT6H. Interacts with RNF126. Directly interacts with MCM3AP; this interaction may favor AICDA recruitment to immunoglobulin variable region genes, hence promoting somatic hypermutations. It depends on Zn(2+) as a cofactor. In terms of processing, ser-38 is the major site whereas Thr-27 is the minor site of phosphorylation. Phosphorylation regulates its class-switch recombination activity. Post-translationally, probably monoubiquitinated on several residues by RNF126. As to expression, strongly expressed in lymph nodes and tonsils.

The protein localises to the nucleus. It is found in the cytoplasm. The protein resides in the cytosol. It carries out the reaction a 2'-deoxycytidine in single-stranded DNA + H2O + H(+) = a 2'-deoxyuridine in single-stranded DNA + NH4(+). Functionally, single-stranded DNA-specific cytidine deaminase. Involved in somatic hypermutation (SHM), gene conversion, and class-switch recombination (CSR) in B-lymphocytes by deaminating C to U during transcription of Ig-variable (V) and Ig-switch (S) region DNA. Required for several crucial steps of B-cell terminal differentiation necessary for efficient antibody responses. May also play a role in the epigenetic regulation of gene expression by participating in DNA demethylation. The polypeptide is Single-stranded DNA cytosine deaminase (AICDA) (Homo sapiens (Human)).